The primary structure comprises 200 residues: dITP/XTP pyrophosphatase (200 aa).

Position 16–21 (16–21) interacts with substrate; that stretch reads SNNDGK. The Mg(2+) site is built by Glu46 and Asp75. Residue Asp75 is the Proton acceptor of the active site. Residues Ser76, 154-157, Lys177, and 182-183 contribute to the substrate site; these read FGYD and HR.

This sequence belongs to the HAM1 NTPase family. As to quaternary structure, homodimer. Mg(2+) serves as cofactor.

It catalyses the reaction XTP + H2O = XMP + diphosphate + H(+). The enzyme catalyses dITP + H2O = dIMP + diphosphate + H(+). The catalysed reaction is ITP + H2O = IMP + diphosphate + H(+). Its function is as follows. Pyrophosphatase that catalyzes the hydrolysis of nucleoside triphosphates to their monophosphate derivatives, with a high preference for the non-canonical purine nucleotides XTP (xanthosine triphosphate), dITP (deoxyinosine triphosphate) and ITP. Seems to function as a house-cleaning enzyme that removes non-canonical purine nucleotides from the nucleotide pool, thus preventing their incorporation into DNA/RNA and avoiding chromosomal lesions. This is dITP/XTP pyrophosphatase from Prochlorococcus marinus (strain SARG / CCMP1375 / SS120).